The following is an 819-amino-acid chain: Leucine--tRNA ligase (819 aa).

A 'HIGH' region motif is present at residues 42–52; sequence PYPSGRLHMGH. The 'KMSKS' region signature appears at 577-581; that stretch reads KMSKS. K580 is a binding site for ATP.

It belongs to the class-I aminoacyl-tRNA synthetase family.

The protein localises to the cytoplasm. The catalysed reaction is tRNA(Leu) + L-leucine + ATP = L-leucyl-tRNA(Leu) + AMP + diphosphate. In Saccharophagus degradans (strain 2-40 / ATCC 43961 / DSM 17024), this protein is Leucine--tRNA ligase.